Here is a 77-residue protein sequence, read N- to C-terminus: U11-lycotoxin-Ls1d (77 aa).

The first 20 residues, 1 to 20 (MKLIIFTGLVLFAIVSLIEA), serve as a signal peptide directing secretion. Positions 21 to 26 (EEESGR) are excised as a propeptide.

Belongs to the neurotoxin 19 (CSTX) family. 10 (U11-Lctx) subfamily. Post-translationally, contains 4 disulfide bonds. Expressed by the venom gland.

The protein localises to the secreted. This Lycosa singoriensis (Wolf spider) protein is U11-lycotoxin-Ls1d.